A 121-amino-acid chain; its full sequence is Large ribosomal subunit protein bL12 (121 aa).

Belongs to the bacterial ribosomal protein bL12 family. In terms of assembly, homodimer. Part of the ribosomal stalk of the 50S ribosomal subunit. Forms a multimeric L10(L12)X complex, where L10 forms an elongated spine to which 2 to 4 L12 dimers bind in a sequential fashion. Binds GTP-bound translation factors.

Forms part of the ribosomal stalk which helps the ribosome interact with GTP-bound translation factors. Is thus essential for accurate translation. The chain is Large ribosomal subunit protein bL12 from Tolumonas auensis (strain DSM 9187 / NBRC 110442 / TA 4).